A 678-amino-acid polypeptide reads, in one-letter code: Penicillin-binding protein activator LpoA (678 aa).

An N-terminal signal peptide occupies residues 1–26 (MVPSTFSRLKAARCLPVVLAALIFAG). Cys27 carries N-palmitoyl cysteine lipidation. The S-diacylglycerol cysteine moiety is linked to residue Cys27. Residues 300–310 (AADVAEQPQPQ) are compositionally biased toward low complexity. Disordered stretches follow at residues 300–340 (AADV…PVSA) and 496–528 (ALTG…DDQF). A compositionally biased stretch (polar residues) spans 311 to 327 (TADSVASPAQASVSDLT). Composition is skewed to low complexity over residues 330 to 340 (QPAAQPVPVSA) and 513 to 528 (TTNN…DDQF).

The protein belongs to the LpoA family. Interacts with PBP1a.

It is found in the cell outer membrane. Functionally, regulator of peptidoglycan synthesis that is essential for the function of penicillin-binding protein 1A (PBP1a). This is Penicillin-binding protein activator LpoA from Shigella flexneri serotype X (strain 2002017).